The sequence spans 529 residues: 1,4-beta-D-glucan cellobiohydrolase xynA (529 aa).

Positions 1-25 (MSALNSFNMYKSALILGSLLATAGA) are cleaved as a signal peptide. The tract at residues 26–456 (QQIGTYTAET…SDIKVGPFNS (431 aa)) is catalytic. N-linked (GlcNAc...) asparagine glycosylation is found at Asn-70 and Asn-219. The active-site Nucleophile is the Glu-234. Residue Glu-239 is the Proton donor of the active site. N-linked (GlcNAc...) asparagine glycosylation is present at Asn-413. Positions 413-438 (NETGTPGAARGSCPTTSGNPKTVESQ) are disordered. The segment covering 425–438 (CPTTSGNPKTVESQ) has biased composition (polar residues). Asn-455 carries an N-linked (GlcNAc...) asparagine glycan. The interval 457–493 (TFSGGTSTGGSTTTTASGTTSTKASTTSTSSTSTGTG) is thr-rich linker. The interval 460–491 (GGTSTGGSTTTTASGTTSTKASTTSTSSTSTG) is disordered. The 37-residue stretch at 493-529 (GVAAHWGQCGGQGWTGPTTCASGTTCTVVNPYYSQCL) folds into the CBM1 domain. 2 cysteine pairs are disulfide-bonded: Cys-501–Cys-518 and Cys-512–Cys-528.

It belongs to the glycosyl hydrolase 7 (cellulase C) family.

The protein resides in the secreted. It carries out the reaction Hydrolysis of (1-&gt;4)-beta-D-glucosidic linkages in cellulose and cellotetraose, releasing cellobiose from the non-reducing ends of the chains.. Cellobiose inhibits xynA at high concentrations. In terms of biological role, the biological conversion of cellulose to glucose generally requires three types of hydrolytic enzymes: (1) Endoglucanases which cut internal beta-1,4-glucosidic bonds; (2) Exocellobiohydrolases that cut the disaccharide cellobiose from the non-reducing end of the cellulose polymer chain; (3) Beta-1,4-glucosidases which hydrolyze the cellobiose and other short cello-oligosaccharides to glucose. The protein is 1,4-beta-D-glucan cellobiohydrolase xynA (xynA) of Talaromyces funiculosus (Fruitlet core rot fungus).